The primary structure comprises 149 residues: UPF0756 membrane protein BBR47_32760 (149 aa).

Transmembrane regions (helical) follow at residues 3–23 (WISIILLVLLALGVIGNNATV), 48–68 (HGLQLGIIILTIGIMTPLASG), 85–105 (LLAVAVGMFVAYLAGKGTVLM), 106–126 (SQNPLIVTGLLLGTIAGVTFF), and 128–148 (GVAVGPLIAAGILAFILQFLP).

The protein belongs to the UPF0756 family.

It localises to the cell membrane. The protein is UPF0756 membrane protein BBR47_32760 of Brevibacillus brevis (strain 47 / JCM 6285 / NBRC 100599).